The following is a 466-amino-acid chain: MTAKKTWSDRFEGSLHPTIVEFNASIGFDIELIEYDLTGSIAHAKMLAYTGIISPEEADSLVSGLEQIRQEYRTGNFNPGIDQEDVHFAVERRLTEIVGDVGKKLHTARSRNDQVGTDIRLYLRQQIDDIRQEIRNFQQALVNHAENHLETLIPGYTHLQRAQPISLAHHLLAYFQMAERDHQRLGQIRARTNISPLGCGALAGTTFPIDRHYSANLLDFEQVYNNSLDGVSDRDFAIEFMTAASLIMVHLSRLSEEMILWASQEFSFITLTDSCATGSSIMPQKKNPDVPELVRGKTGRVFGHLQALLTLMKGLPLAYNKDLQEDKEALFDGVKTVRICLQAMTVLLATGIQFKTDRLANAVAEDFSNATDVADYLASKGIPFREAYNLVGKVVKSSLAAGKLLKDLTLTEWQELHPAFEADIYDAIAPRQVVAARNSYGGTGFEEVRSALIQAKAILDHRKFWV.

This sequence belongs to the lyase 1 family. Argininosuccinate lyase subfamily.

It is found in the cytoplasm. The enzyme catalyses 2-(N(omega)-L-arginino)succinate = fumarate + L-arginine. It functions in the pathway amino-acid biosynthesis; L-arginine biosynthesis; L-arginine from L-ornithine and carbamoyl phosphate: step 3/3. This is Argininosuccinate lyase from Microcystis aeruginosa (strain NIES-843 / IAM M-2473).